A 253-amino-acid chain; its full sequence is Indole-3-glycerol phosphate synthase (253 aa).

The protein belongs to the TrpC family.

The enzyme catalyses 1-(2-carboxyphenylamino)-1-deoxy-D-ribulose 5-phosphate + H(+) = (1S,2R)-1-C-(indol-3-yl)glycerol 3-phosphate + CO2 + H2O. It participates in amino-acid biosynthesis; L-tryptophan biosynthesis; L-tryptophan from chorismate: step 4/5. The protein is Indole-3-glycerol phosphate synthase of Bacillus cereus (strain AH187).